The sequence spans 108 residues: FK506-binding protein 1 (108 aa).

The region spanning 20 to 108 is the PPIase FKBP-type domain; it reads GDAVTIHYVG…VFDVELLGIN (89 aa).

This sequence belongs to the FKBP-type PPIase family. FKBP1 subfamily.

The protein resides in the cytoplasm. The catalysed reaction is [protein]-peptidylproline (omega=180) = [protein]-peptidylproline (omega=0). Inhibited by both FK506 and rapamycin. In terms of biological role, PPIases accelerate the folding of proteins. It catalyzes the cis-trans isomerization of proline imidic peptide bonds in oligopeptides. In Yarrowia lipolytica (strain CLIB 122 / E 150) (Yeast), this protein is FK506-binding protein 1 (FPR1).